The primary structure comprises 453 residues: Bestrophin homolog 5 (453 aa).

Transmembrane regions (helical) follow at residues 78-98 (ELIVWICAYSLVSVIYRFALT), 113-133 (DARMGYLPLNFVLGFFCNIII), 275-295 (IPLMYPQLVNMAVHTYFFLCI), and 314-334 (LYIPFMTIIEFIFYMGWLKVA).

It belongs to the anion channel-forming bestrophin (TC 1.A.46) family. Calcium-sensitive chloride channel subfamily. As to quaternary structure, forms oligomers.

The protein localises to the cell membrane. Its function is as follows. Forms chloride channels. This is Bestrophin homolog 5 (best-5) from Caenorhabditis elegans.